A 522-amino-acid chain; its full sequence is Ribose import ATP-binding protein RbsA 1 (522 aa).

ABC transporter domains are found at residues 8–243 (LRIE…GRSI) and 249–496 (RERP…VSTN). 40–47 (GENGAGKS) contributes to the ATP binding site. A disordered region spans residues 492–522 (AVSTNQYKPDKSDKPDASAGKTDQKEAPRGH). Residues 499–522 (KPDKSDKPDASAGKTDQKEAPRGH) show a composition bias toward basic and acidic residues.

Belongs to the ABC transporter superfamily. Ribose importer (TC 3.A.1.2.1) family. In terms of assembly, the complex is composed of an ATP-binding protein (RbsA), two transmembrane proteins (RbsC) and a solute-binding protein (RbsB).

The protein resides in the cell membrane. It catalyses the reaction D-ribose(out) + ATP + H2O = D-ribose(in) + ADP + phosphate + H(+). Functionally, part of the ABC transporter complex RbsABC involved in ribose import. Responsible for energy coupling to the transport system. The sequence is that of Ribose import ATP-binding protein RbsA 1 from Streptomyces avermitilis (strain ATCC 31267 / DSM 46492 / JCM 5070 / NBRC 14893 / NCIMB 12804 / NRRL 8165 / MA-4680).